A 65-amino-acid polypeptide reads, in one-letter code: Large ribosomal subunit protein bL33 (65 aa).

The disordered stretch occupies residues 20–42 (APASEKRSPGVSRYTTEKNRRNT).

This sequence belongs to the bacterial ribosomal protein bL33 family.

The protein is Large ribosomal subunit protein bL33 of Prochlorococcus marinus (strain SARG / CCMP1375 / SS120).